Consider the following 180-residue polypeptide: MGSSTGFHHADHVNYSSNLNKEEILEQLLLSYEGLSDGQVNWVCNLSNASSLIWHAYKSLAVDINWAGFYVTQASEENTLILGPFQGKVACQMIQFGKGVCGTAASTKETQIVPDVNKYPGHIACDGETKSEIVVPIISNDGKTLGVIDIDCLDYEGFDHVDKEFLEKLAKLINKSCVFK.

Residues 99–177 enclose the GAF domain; sequence GVCGTAASTK…KLAKLINKSC (79 aa).

Belongs to the free Met sulfoxide reductase family.

The protein localises to the cytoplasm. It localises to the nucleus. The catalysed reaction is [thioredoxin]-disulfide + L-methionine + H2O = L-methionine (R)-S-oxide + [thioredoxin]-dithiol. Functionally, catalyzes the reversible oxidation-reduction of the R-enantiomer of free methionine sulfoxide to methionine. Does not act on S-enantiomer of free methionine sulfoxide or R-enantiomer of dabsylated methionine sulfoxide. Involved in protection against oxidative stress. The chain is Free methionine-R-sulfoxide reductase from Saccharomyces cerevisiae (strain ATCC 204508 / S288c) (Baker's yeast).